The sequence spans 597 residues: Kelch-like protein 21 (597 aa).

Residues 35–103 (LDVTLEAAGG…SYTGRVAVSG (69 aa)) form the BTB domain. The 102-residue stretch at 138–239 (CLDMQDFAEA…RRFYLLAHVE (102 aa)) folds into the BACK domain. Kelch repeat units follow at residues 287-335 (ILVL…ALGN), 336-382 (DIYV…VLDG), 384-422 (LYVV…ACRG), 423-470 (RLYA…TLNG), 472-512 (MYFV…VLGG), and 513-560 (KLYV…SIFR). Positions 570-597 (GRGFELDSGSDDMDPGRPRPPRDPDELH) are disordered. The segment covering 583-597 (DPGRPRPPRDPDELH) has biased composition (basic and acidic residues).

Component of the BCR(KLHL21) E3 ubiquitin ligase complex, at least composed of CUL3, KLHL21 and RBX1.

Its subcellular location is the cytoplasm. It is found in the cytoskeleton. The protein localises to the spindle. Its pathway is protein modification; protein ubiquitination. Its function is as follows. Substrate-specific adapter of a BCR (BTB-CUL3-RBX1) E3 ubiquitin-protein ligase complex required for efficient chromosome alignment and cytokinesis. The BCR(KLHL21) E3 ubiquitin ligase complex regulates localization of the chromosomal passenger complex (CPC) from chromosomes to the spindle midzone in anaphase and mediates the ubiquitination of AURKB. Ubiquitination of AURKB by BCR(KLHL21) E3 ubiquitin ligase complex may not lead to its degradation by the proteasome. The chain is Kelch-like protein 21 (KLHL21) from Homo sapiens (Human).